A 100-amino-acid chain; its full sequence is Integration host factor subunit alpha (100 aa).

The protein belongs to the bacterial histone-like protein family. In terms of assembly, heterodimer of an alpha and a beta chain.

This protein is one of the two subunits of integration host factor, a specific DNA-binding protein that functions in genetic recombination as well as in transcriptional and translational control. The sequence is that of Integration host factor subunit alpha from Ruegeria pomeroyi (strain ATCC 700808 / DSM 15171 / DSS-3) (Silicibacter pomeroyi).